We begin with the raw amino-acid sequence, 414 residues long: 2,3-diketo-5-methylthiopentyl-1-phosphate enolase (414 aa).

The active-site Proton acceptor is Lys-99. Residues Lys-148, 174 to 177 (KDDE), His-265, Gly-338, and 360 to 361 (GG) each bind substrate. Residues Lys-174, Asp-176, and Glu-177 each coordinate Mg(2+). N6-carboxylysine is present on Lys-174.

It belongs to the RuBisCO large chain family. Type IV subfamily. Homodimer. Mg(2+) is required as a cofactor.

The catalysed reaction is 5-methylsulfanyl-2,3-dioxopentyl phosphate = 2-hydroxy-5-methylsulfanyl-3-oxopent-1-enyl phosphate. It functions in the pathway amino-acid biosynthesis; L-methionine biosynthesis via salvage pathway; L-methionine from S-methyl-5-thio-alpha-D-ribose 1-phosphate: step 3/6. Catalyzes the enolization of 2,3-diketo-5-methylthiopentyl-1-phosphate (DK-MTP-1-P) into 2-hydroxy-3-keto-5-methylthiopentenyl-1-phosphate (HK-MTPenyl-1-P). This is 2,3-diketo-5-methylthiopentyl-1-phosphate enolase from Bacillus cereus (strain AH820).